The sequence spans 434 residues: (3,5-dihydroxyphenyl)acetyl-CoA 1,2-dioxygenase (434 aa).

Residues aspartate 184, glutamate 190, 223 to 226 (HPRY), 234 to 239 (AGINLK), glycine 293, 322 to 324 (IPG), and glutamine 413 contribute to the substrate site.

Belongs to the enoyl-CoA hydratase/isomerase family. In terms of assembly, homohexamer; dimer of trimers.

The catalysed reaction is (3,5-dihydroxyphenyl)acetyl-CoA + O2 = 2-(3,5-dihydroxyphenyl)-2-oxoacetate + CoA + H(+). Involved in the biosynthesis of the nonproteinogenic amino acid monomer (S)-3,5-dihydroxyphenylglycine (Dpg) responsible of the production of vancomycin and teicoplanin antibiotics. Catalyzes the unusual conversion 3,5-dihydroxyphenylacetyl-CoA (DPA-CoA) to 3,5-dihydroxyphenylglyoxylate. DpgC performed a net four-electron oxidation of the benzylic carbon of DPA-CoA and the hydrolysis of the thioester bond to generate free CoA. It can also use phenylacetyl-CoA (PA-CoA) as substrate. The sequence is that of (3,5-dihydroxyphenyl)acetyl-CoA 1,2-dioxygenase (dpgC) from Amycolatopsis orientalis (Nocardia orientalis).